The primary structure comprises 527 residues: Proline--tRNA ligase (527 aa).

The protein belongs to the class-II aminoacyl-tRNA synthetase family. ProS type 3 subfamily. Homodimer.

It localises to the cytoplasm. The catalysed reaction is tRNA(Pro) + L-proline + ATP = L-prolyl-tRNA(Pro) + AMP + diphosphate. Its function is as follows. Catalyzes the attachment of proline to tRNA(Pro) in a two-step reaction: proline is first activated by ATP to form Pro-AMP and then transferred to the acceptor end of tRNA(Pro). This is Proline--tRNA ligase from Sphingopyxis alaskensis (strain DSM 13593 / LMG 18877 / RB2256) (Sphingomonas alaskensis).